The sequence spans 165 residues: Nicotine 6-hydroxylase small subunit (165 aa).

A 2Fe-2S ferredoxin-type domain is found at V10 to L86. [2Fe-2S] cluster contacts are provided by C48, C53, C56, and C68.

As to quaternary structure, heterotrimer composed of a large subunit (NdhL), a medium subunit (NdhM) and a small subunit (NdhS). Requires [2Fe-2S] cluster as cofactor.

The protein localises to the cytoplasm. The enzyme catalyses (R)-nicotine + A + H2O = (R)-6-hydroxynicotine + AH2. It catalyses the reaction (S)-nicotine + A + H2O = (S)-6-hydroxynicotine + AH2. The protein operates within alkaloid degradation; nicotine degradation; 6-hydroxypseudooxynicotine from nicotine (R-isomer route): step 1/2. It participates in alkaloid degradation; nicotine degradation; 6-hydroxypseudooxynicotine from nicotine (S-isomer route): step 1/2. Nicotine dehydrogenase activity is inhibited by tungsten. Its function is as follows. Component of the nicotine 6-hydroxylase, which is involved in the degradation of nicotine. Catalyzes the hydroxylation of the pyridine ring at C6 to form 6-hydroxynicotine. Can use both L-nicotine and D-nicotine. The chain is Nicotine 6-hydroxylase small subunit from Paenarthrobacter nicotinovorans (Arthrobacter nicotinovorans).